Here is a 223-residue protein sequence, read N- to C-terminus: Adenylate kinase (223 aa).

10–15 provides a ligand contact to ATP; the sequence is GSGKGT. Residues 30 to 59 form an NMP region; the sequence is ESGAIFRQHIGGGTELGKKAKEYIDRGDLV. Residues serine 31, arginine 36, 57 to 59, 84 to 87, and glutamine 91 each bind AMP; these read DLV and GFPR. The segment at 125–164 is LID; sequence GRRLCKNDNNHPNNIFIDAIKPDGDVCRVCGGSLSARADD. Position 126 (arginine 126) interacts with ATP. Arginine 161 and arginine 173 together coordinate AMP. Glycine 209 contributes to the ATP binding site.

The protein belongs to the adenylate kinase family. In terms of assembly, monomer.

It localises to the cytoplasm. It catalyses the reaction AMP + ATP = 2 ADP. It functions in the pathway purine metabolism; AMP biosynthesis via salvage pathway; AMP from ADP: step 1/1. Catalyzes the reversible transfer of the terminal phosphate group between ATP and AMP. Plays an important role in cellular energy homeostasis and in adenine nucleotide metabolism. The protein is Adenylate kinase of Nitratidesulfovibrio vulgaris (strain DSM 19637 / Miyazaki F) (Desulfovibrio vulgaris).